The chain runs to 405 residues: Secreted aspartic protease 8 (405 aa).

An N-terminal signal peptide occupies residues 1-25 (MVSIITFTKNVLVTLAFALLAQGLA). Asn50 carries an N-linked (GlcNAc...) asparagine glycan. The disordered stretch occupies residues 52–78 (TAHGQHHQSQQQQQQQQQQPAQKRGTV). Residues 58 to 70 (HQSQQQQQQQQQQ) are compositionally biased toward low complexity. Residues 89 to 392 (YAATITVGSN…DLDGNTISLA (304 aa)) form the Peptidase A1 domain. The active site involves Asp107. 107–109 (DTG) contributes to the pepstatin A binding site. A disulfide bridge links Cys122 with Cys134. Asp292 is a catalytic residue. 292–296 (DSGTT) is a binding site for pepstatin A. A disulfide bridge connects residues Cys327 and Cys358.

Belongs to the peptidase A1 family. In terms of assembly, monomer.

The protein resides in the secreted. It carries out the reaction Preferential cleavage at the carboxyl of hydrophobic amino acids, but fails to cleave 15-Leu-|-Tyr-16, 16-Tyr-|-Leu-17 and 24-Phe-|-Phe-25 of insulin B chain. Activates trypsinogen, and degrades keratin.. Secreted aspartic peptidases (SAPs) are a group of ten acidic hydrolases considered as key virulence factors. These enzymes supply the fungus with nutrient amino acids as well as are able to degrade the selected host's proteins involved in the immune defense. Moreover, acts toward human hemoglobin though limited proteolysis to generate a variety of antimicrobial hemocidins, enabling to compete with the other microorganisms of the same physiological niche using the microbicidal peptides generated from the host protein. Its function is as follows. Plays a key role in defense against host by cleaving histatin-5 (Hst 5), a peptide from human saliva that carries out fungicidal activity. The cleavage rate decreases in an order of SAP2 &gt; SAP9 &gt; SAP3 &gt; SAP7 &gt; SAP4 &gt; SAP1 &gt; SAP8. The hydrolysis of Hst 5 by SAP8 causes production of the DSHAKRHHGY, HHSHRGY and FHEKHHSHRGY peptides. The sequence is that of Secreted aspartic protease 8 from Candida albicans (Yeast).